We begin with the raw amino-acid sequence, 157 residues long: Rieske domain-containing protein (157 aa).

M1 carries the N-acetylmethionine modification. Position 6 is a phosphoserine (S6). Rieske domains follow at residues 16 to 127 (TSVC…VDNG) and 17 to 131 (SVCV…NIYV). 4 residues coordinate [2Fe-2S] cluster: C57, H59, C80, and H83.

The cofactor is [2Fe-2S] cluster.

In Mus musculus (Mouse), this protein is Rieske domain-containing protein (Rfesd).